The following is a 213-amino-acid chain: Ion-translocating oxidoreductase complex subunit E (213 aa).

Helical transmembrane passes span 25-45 (TFGL…VENG), 46-66 (IGMA…VSAI), 77-97 (PVEI…MEAF), 100-120 (DLYT…IVIG), 135-155 (IIDA…IGGI), and 181-201 (AMFM…MTIV).

Belongs to the NqrDE/RnfAE family. As to quaternary structure, the Rnf complex is probably composed of eight subunits, including RnfA, RnfB, RnfC, RnfD, RnfE and RnfG.

It is found in the cell membrane. Part of a membrane-bound complex that couples electron transfer with translocation of ions across the membrane. Catalyzes Na(+) transport, most probably coupled to electron transfer from reduced ferredoxin to methanophenazine and heterodisulfide reductase. Involved in heterodisulfide reduction during methanogenesis from acetate. The polypeptide is Ion-translocating oxidoreductase complex subunit E (Methanosarcina acetivorans (strain ATCC 35395 / DSM 2834 / JCM 12185 / C2A)).